A 743-amino-acid chain; its full sequence is Inhibitor of nuclear factor kappa-B kinase subunit alpha (743 aa).

The region spanning 15 to 300 is the Protein kinase domain; that stretch reads WDMKDRLGTG…MDCGRPQCFV (286 aa). Residues 21 to 29 and Lys44 each bind ATP; that span reads LGTGGFGNV. Residue Asp144 is the Proton acceptor of the active site. Positions 453-474 are leucine-zipper; that stretch reads LLRFNTNLTKMKNTMVSASQQL. Positions 736-741 are NEMO-binding; that stretch reads LDFSWL.

It belongs to the protein kinase superfamily. Ser/Thr protein kinase family. I-kappa-B kinase subfamily.

The protein resides in the cytoplasm. Its subcellular location is the nucleus. The enzyme catalyses L-seryl-[I-kappa-B protein] + ATP = O-phospho-L-seryl-[I-kappa-B protein] + ADP + H(+). With respect to regulation, activated when phosphorylated and inactivated when dephosphorylated. Functionally, phosphorylates inhibitors of NF-kappa-B thus leading to the dissociation of the inhibitor/NF-kappa-B complex and ultimately the degradation of the inhibitor. Phosphorylates 'Ser-10' of histone H3 at NF-kappa-B-regulated promoters during inflammatory responses triggered by cytokines. The polypeptide is Inhibitor of nuclear factor kappa-B kinase subunit alpha (chuk) (Xenopus tropicalis (Western clawed frog)).